The chain runs to 123 residues: Small ribosomal subunit protein uS12 (123 aa).

D89 carries the 3-methylthioaspartic acid modification.

Belongs to the universal ribosomal protein uS12 family. In terms of assembly, part of the 30S ribosomal subunit. Contacts proteins S8 and S17. May interact with IF1 in the 30S initiation complex.

Functionally, with S4 and S5 plays an important role in translational accuracy. In terms of biological role, interacts with and stabilizes bases of the 16S rRNA that are involved in tRNA selection in the A site and with the mRNA backbone. Located at the interface of the 30S and 50S subunits, it traverses the body of the 30S subunit contacting proteins on the other side and probably holding the rRNA structure together. The combined cluster of proteins S8, S12 and S17 appears to hold together the shoulder and platform of the 30S subunit. The protein is Small ribosomal subunit protein uS12 of Myxococcus xanthus.